The sequence spans 414 residues: CCA-adding enzyme (414 aa).

Positions 8 and 11 each coordinate ATP. Positions 8 and 11 each coordinate CTP. Mg(2+) is bound by residues D21 and D23. ATP contacts are provided by R91, R137, and R140. Residues R91, R137, and R140 each contribute to the CTP site.

This sequence belongs to the tRNA nucleotidyltransferase/poly(A) polymerase family. Bacterial CCA-adding enzyme type 2 subfamily. The cofactor is Mg(2+).

The catalysed reaction is a tRNA precursor + 2 CTP + ATP = a tRNA with a 3' CCA end + 3 diphosphate. It carries out the reaction a tRNA with a 3' CCA end + 2 CTP + ATP = a tRNA with a 3' CCACCA end + 3 diphosphate. Catalyzes the addition and repair of the essential 3'-terminal CCA sequence in tRNAs without using a nucleic acid template. Adds these three nucleotides in the order of C, C, and A to the tRNA nucleotide-73, using CTP and ATP as substrates and producing inorganic pyrophosphate. tRNA 3'-terminal CCA addition is required both for tRNA processing and repair. Also involved in tRNA surveillance by mediating tandem CCA addition to generate a CCACCA at the 3' terminus of unstable tRNAs. While stable tRNAs receive only 3'-terminal CCA, unstable tRNAs are marked with CCACCA and rapidly degraded. This is CCA-adding enzyme from Buchnera aphidicola subsp. Acyrthosiphon pisum (strain 5A).